The following is a 391-amino-acid chain: Pectate lyase B (391 aa).

Residues Met-1–Ala-30 form the signal peptide. 3 residues coordinate Ca(2+): Asp-181, Asp-203, and Asp-207. Residue Arg-305 is part of the active site.

The protein belongs to the polysaccharide lyase 1 family. Requires Ca(2+) as cofactor.

The protein resides in the secreted. The enzyme catalyses Eliminative cleavage of (1-&gt;4)-alpha-D-galacturonan to give oligosaccharides with 4-deoxy-alpha-D-galact-4-enuronosyl groups at their non-reducing ends.. It catalyses the reaction Eliminative cleavage of (1-&gt;4)-alpha-D-galacturonan methyl ester to give oligosaccharides with 4-deoxy-6-O-methyl-alpha-D-galact-4-enuronosyl groups at their non-reducing ends.. It participates in glycan metabolism; pectin degradation. Its function is as follows. Catalyzes the depolymerization of both polygalacturonate and pectins of various methyl esterification degree, with an endo mode of action. Shows the highest activity on 20 to 34% methylated pectin but retains 67%, 51%, 25%, and 1% of its maximum activity on polygalacturonate and 8.5%, 55 to 70%, and 90% methylated pectin, respectively. In Paenibacillus amylolyticus, this protein is Pectate lyase B.